A 201-amino-acid chain; its full sequence is Natural cytotoxicity triggering receptor 3 (201 aa).

An N-terminal signal peptide occupies residues 1-18 (MAWMLLLILIMVYPGSCA). The 108-residue stretch at 19–126 (LWVSQPPEIR…VGTGNGTRLV (108 aa)) folds into the Ig-like domain. The Extracellular portion of the chain corresponds to 19-133 (LWVSQPPEIR…RLVVEKEYPQ (115 aa)). Cys39 and Cys108 are disulfide-bonded. N-linked (GlcNAc...) asparagine glycans are attached at residues Asn42 and Asn121. Residues 134–154 (LGAGTVLLLRAGFYAVSFLSV) form a helical membrane-spanning segment. Topologically, residues 155–201 (AMGSTLYYQGKCLTWKGPRRQLPAVVPGPLPPPCGSSAHLLPPVPGG) are cytoplasmic.

It belongs to the natural cytotoxicity receptor (NCR) family. As to quaternary structure, homodimer in the unliganted form. Interacts with CD3Z. Interacts with and is activated by binding to NCR3LG1. Interacts with and is activated by binding to BAG6. Interacts with and is inhibited by binding to LGALS3.

The protein resides in the cell membrane. Its function is as follows. Cell membrane receptor of natural killer/NK cells that is activated by binding of extracellular ligands including BAG6 and NCR3LG1. Stimulates NK cells cytotoxicity toward neighboring cells producing these ligands. It controls, for instance, NK cells cytotoxicity against tumor cells. Engagement of NCR3 by BAG6 also promotes myeloid dendritic cells (DC) maturation, both through killing DCs that did not acquire a mature phenotype, and inducing the release by NK cells of TNFA and IFNG that promote DC maturation. The sequence is that of Natural cytotoxicity triggering receptor 3 (NCR3) from Macaca mulatta (Rhesus macaque).